Here is a 203-residue protein sequence, read N- to C-terminus: Superoxide dismutase [Mn] (203 aa).

Mn(2+) contacts are provided by H27, H81, D164, and H168.

Belongs to the iron/manganese superoxide dismutase family. Requires Mn(2+) as cofactor.

It carries out the reaction 2 superoxide + 2 H(+) = H2O2 + O2. Destroys superoxide anion radicals which are normally produced within the cells and which are toxic to biological systems. The polypeptide is Superoxide dismutase [Mn] (sodA) (Xanthomonas campestris pv. campestris (strain 8004)).